We begin with the raw amino-acid sequence, 217 residues long: MPCRIAIDGPAGSGKTTVAKLLADALGIFYLDTGAMYRIVGLYLSENNVESDEEIERKLKELKITFSNGNFFLNGRKIGNEIRTPEIGIYASKYAKRLPVRNYLTKIQREIAKNQSIVVEGRDIGTVVLPDAEVKIFLVASQEARAKRRYKELMEKGVEVTFEEVLSEIVLRDKQDSERDVAPLKKAKDAILIDTTNLSIEEVIERILKVVKEKCKL.

Residue 9–17 (GPAGSGKTT) coordinates ATP.

It belongs to the cytidylate kinase family. Type 1 subfamily.

The protein resides in the cytoplasm. It carries out the reaction CMP + ATP = CDP + ADP. The enzyme catalyses dCMP + ATP = dCDP + ADP. In Thermosipho melanesiensis (strain DSM 12029 / CIP 104789 / BI429), this protein is Cytidylate kinase.